A 1378-amino-acid polypeptide reads, in one-letter code: Disease resistance protein RRS1 (1378 aa).

One can recognise a TIR domain in the interval 5-146; sequence EKDEEFVCIS…EIVRDVYETH (142 aa). The region spanning 170-421 is the NB-ARC domain; that stretch reads IGIRCVGIWG…LLEGCGFFPH (252 aa). ATP is bound at residue 179–186; that stretch reads GMPGIGKT. LRR repeat units lie at residues 498 to 522, 535 to 553, 554 to 575, 577 to 598, 621 to 646, 665 to 688, 742 to 766, 768 to 793, and 831 to 854; these read SEEIEGLFLDTSNLRFDLQPSAFKN, NPEVHPVINFPTGSLHSLP, NELRLLHWENYPLKSLPQNFDP, HLVEINMPYSQLQKLWGGTKNL, AENLEVIDLQGCTRLQNFPAAGRLLR, PPNIEKLHLQGTGILALPVSTVKP, LPNMANLDLNVLDLSGCSSLNSIQG, PRFLKQLYLGGTAIREVPQLPQSLEI, and PRNLKELYFAGTTLREVPQLPLSL. The short motif at 988–1005 is the Nuclear localization signal element; that stretch reads RNFHCWAPGKVVPKVRKD. Positions 1204–1272 form a DNA-binding region, WRKY; that stretch reads IPAIDEGDLW…YLSEHNHPRP (69 aa). Residues 1300-1321 are disordered; sequence RVFQNKDEPNQPHLPSSSTPPR.

As to quaternary structure, interacts with PopP2, a R.solanacearum type III effector.

It is found in the nucleus. The protein localises to the cytoplasm. Transcription factor. Interacts specifically with the W box (5'-(T)TGAC[CT]-3'), a frequently occurring elicitor-responsive cis-acting element. Also acts as a disease resistance protein involved in resistance to fungal and bacterial pathogens, including R.solanacearum, P.syringae pv. tomato and C.higginsianum. RRS1 mediated resistance depends on salicylic acid and NDR1 (AC O48915). The chain is Disease resistance protein RRS1 from Arabidopsis thaliana (Mouse-ear cress).